Reading from the N-terminus, the 104-residue chain is MAAKIRKGDKVIVLNGRDKGRTGEVFEVRPTENKALVRGVNLVKRHQKQTQAQEGGIISKEAAIHLSNIAIVGKDGKPTRVGFKIQADGKKVRIAKRSGAEIDG.

The protein belongs to the universal ribosomal protein uL24 family. As to quaternary structure, part of the 50S ribosomal subunit.

Functionally, one of two assembly initiator proteins, it binds directly to the 5'-end of the 23S rRNA, where it nucleates assembly of the 50S subunit. Its function is as follows. One of the proteins that surrounds the polypeptide exit tunnel on the outside of the subunit. The protein is Large ribosomal subunit protein uL24 of Rhodopseudomonas palustris (strain BisB18).